The sequence spans 315 residues: Cross-pathway control WD-repeat protein 2 (315 aa).

7 WD repeats span residues 14–54 (GHKG…DSYG), 62–101 (GHNH…TTRR), 104–144 (GHTS…YDIK), 147–188 (CHTE…LKTN), 191–230 (GHTG…HLYS), 232–270 (EAGD…IVDE), and 282–315 (GRQP…TVTS).

It belongs to the WD repeat G protein beta family. Ribosomal protein RACK1 subfamily.

Functionally, component of the ribosome, a large ribonucleoprotein complex responsible for the synthesis of proteins in the cell. The small ribosomal subunit (SSU) binds messenger RNAs (mRNAs) and translates the encoded message by selecting cognate aminoacyl-transfer RNA (tRNA) molecules. The large subunit (LSU) contains the ribosomal catalytic site termed the peptidyl transferase center (PTC), which catalyzes the formation of peptide bonds, thereby polymerizing the amino acids delivered by tRNAs into a polypeptide chain. The nascent polypeptides leave the ribosome through a tunnel in the LSU and interact with protein factors that function in enzymatic processing, targeting, and the membrane insertion of nascent chains at the exit of the ribosomal tunnel. Plays in important role in the regulation of vegetative growth and fruiting body development. Especially, positively regulates the expression of genes involved in fruiting body development such as FVFD30 and FVFD16, as well as genes encoding for lectins and hydrophobins. Also regulates the expression of genes involved in cAMP signaling pathway. The chain is Cross-pathway control WD-repeat protein 2 from Flammulina velutipes (Agaricus velutipes).